A 256-amino-acid chain; its full sequence is 5-keto-4-deoxy-D-glucarate aldolase (256 aa).

H50 (proton acceptor) is an active-site residue. Position 151 (Q151) interacts with substrate. Residue E153 participates in Mg(2+) binding. Residues S178 and D179 each contribute to the substrate site. D179 lines the Mg(2+) pocket.

It belongs to the HpcH/HpaI aldolase family. KDGluc aldolase subfamily. Homohexamer; trimer of dimers. Mg(2+) serves as cofactor.

It catalyses the reaction 5-dehydro-4-deoxy-D-glucarate = 2-hydroxy-3-oxopropanoate + pyruvate. The enzyme catalyses 2-dehydro-3-deoxy-D-glucarate = 2-hydroxy-3-oxopropanoate + pyruvate. Its pathway is carbohydrate acid metabolism; galactarate degradation; D-glycerate from galactarate: step 2/3. In terms of biological role, catalyzes the reversible retro-aldol cleavage of both 5-keto-4-deoxy-D-glucarate and 2-keto-3-deoxy-D-glucarate to pyruvate and tartronic semialdehyde. The polypeptide is 5-keto-4-deoxy-D-glucarate aldolase (Shigella boydii serotype 4 (strain Sb227)).